Reading from the N-terminus, the 664-residue chain is uncharacterized protein (664 aa).

This is an uncharacterized protein from Sinorhizobium fredii (strain NBRC 101917 / NGR234).